A 336-amino-acid chain; its full sequence is 3-isopropylmalate dehydrogenase (336 aa).

4 residues coordinate substrate: Arg-87, Arg-97, Arg-121, and Asp-211. Positions 211, 235, and 239 each coordinate Mg(2+). 271 to 283 (GSAPDIAGQGIAD) serves as a coordination point for NAD(+).

Belongs to the isocitrate and isopropylmalate dehydrogenases family. LeuB type 2 subfamily. As to quaternary structure, homodimer. Mg(2+) is required as a cofactor. It depends on Mn(2+) as a cofactor.

The protein resides in the cytoplasm. It catalyses the reaction (2R,3S)-3-isopropylmalate + NAD(+) = 4-methyl-2-oxopentanoate + CO2 + NADH. It participates in amino-acid biosynthesis; L-leucine biosynthesis; L-leucine from 3-methyl-2-oxobutanoate: step 3/4. Functionally, catalyzes the oxidation of 3-carboxy-2-hydroxy-4-methylpentanoate (3-isopropylmalate) to 3-carboxy-4-methyl-2-oxopentanoate. The product decarboxylates to 4-methyl-2 oxopentanoate. The sequence is that of 3-isopropylmalate dehydrogenase from Mycobacterium bovis (strain ATCC BAA-935 / AF2122/97).